Reading from the N-terminus, the 771-residue chain is U-box domain-containing protein 6 (771 aa).

The 75-residue stretch at 274–348 (IPPEELRCPI…ASWCEQNGIT (75 aa)) folds into the U-box domain. A disordered region spans residues 394 to 415 (EESSTIESERQQKEKNNAPDEV). Residues 400-411 (ESERQQKEKNNA) are compositionally biased toward basic and acidic residues. ARM repeat units lie at residues 456–499 (EEAR…NLAV), 502–542 (NRNK…CLEK), 544–581 (KPVIGSSQAVSFFVNLLLQDTKTQCKLDALHALYNLST), 583–622 (SPNIPTLLSSNIIKSLQVLASTGNHLWIEKSLAVLLNLAS), and 625–664 (EGKEEMITTQGMISTLATVLDTGDTVEQEQAVSCLVILCT). Over residues 706 to 722 (EQRHRDQPSPNKEEAPR) the composition is skewed to basic and acidic residues. The segment at 706-751 (EQRHRDQPSPNKEEAPRKTVSAPMAIPAPVSAPESEVKPLTKSISR) is disordered.

It carries out the reaction S-ubiquitinyl-[E2 ubiquitin-conjugating enzyme]-L-cysteine + [acceptor protein]-L-lysine = [E2 ubiquitin-conjugating enzyme]-L-cysteine + N(6)-ubiquitinyl-[acceptor protein]-L-lysine.. It functions in the pathway protein modification; protein ubiquitination. Functionally, functions as an E3 ubiquitin ligase. This is U-box domain-containing protein 6 (PUB6) from Arabidopsis thaliana (Mouse-ear cress).